An 804-amino-acid polypeptide reads, in one-letter code: uncharacterized protein (804 aa).

Helical transmembrane passes span 15–35 (LLIVWLALSLAVACVLALGNI), 243–263 (FLLLSALLTLLLAVAAVAVAM), 301–321 (LSAVTGGAIGLLFENVLMVLL), 333–353 (SLWPWLWALGTMTVISLLVGL), 381–401 (FYLPIVSVVVVLLLAGLMGGS), 403–423 (LLWAVLAGAVVLALLCGVLGW), 453–473 (TLSQLSAFSLSFMLLALLLVL), 680–700 (ALEVMVVLVTACGMLLLLAQV), 734–754 (MLGFVSGLVAAIGAETALAVL), and 769–789 (LWIVLPCSGALLLSLFGGWLG).

It belongs to the ABC-4 integral membrane protein family.

It localises to the cell membrane. This is an uncharacterized protein from Escherichia coli (strain K12).